We begin with the raw amino-acid sequence, 283 residues long: Non-selective voltage-gated ion channel VDAC3 (283 aa).

Cys2 is subject to N-acetylcysteine. Thr4 carries the post-translational modification Phosphothreonine. N6-acetyllysine is present on residues Lys12, Lys15, and Lys20. The next 2 membrane-spanning stretches (beta stranded) occupy residues 26-35 (MVKIDLRTKS) and 39-47 (VEFSTSGHA). Lys53 is covalently cross-linked (Glycyl lysine isopeptide (Lys-Gly) (interchain with G-Cter in ubiquitin)). 3 beta stranded membrane-spanning segments follow: residues 54 to 64 (ASGNLETKYKI), 69 to 76 (LTFTQKWN), and 80 to 89 (TLGTEISLEN). Lys90 carries the N6-acetyllysine modification. The beta stranded transmembrane segment at 95–104 (LKLTLDTIFV) threads the bilayer. Glycyl lysine isopeptide (Lys-Gly) (interchain with G-Cter in ubiquitin) cross-links involve residues Lys109 and Lys110. A run of 10 beta stranded transmembrane segments spans residues 111-120 (SGKLKASYKR), 123-130 (FSIGSNVD), 137-145 (TIYGWAVLA), 150-158 (LAGYQMSFD), 163-175 (KLSQ…GYKA), 178-185 (FQLHTHVN), 189-198 (EFGGSIYQKV), 202-211 (IETSINLAWT), 218-227 (RFGIAAKYKL), and 231-238 (TSLSAKVN). Position 241 is a phosphoserine (Ser241). Residues 242-244 (LIG) and 260-264 (SALID) contribute to the NAD(+) site. 2 beta stranded membrane passes run 242–251 (LIGLGYTQTL) and 254–263 (GVKLTLSALI). Residue Lys266 is modified to N6-acetyllysine; alternate. Residue Lys266 forms a Glycyl lysine isopeptide (Lys-Gly) (interchain with G-Cter in ubiquitin); alternate linkage. The beta stranded transmembrane segment at 273–282 (HKVGLGFELE) threads the bilayer.

The protein belongs to the eukaryotic mitochondrial porin family. As to quaternary structure, interacts with ARMC12 in a TBC1D21-dependent manner. Interacts with MISFA. Post-translationally, ubiquitinated by PRKN during mitophagy, leading to its degradation and enhancement of mitophagy. Deubiquitinated by USP30.

Its subcellular location is the mitochondrion outer membrane. It localises to the membrane. It carries out the reaction chloride(in) = chloride(out). The catalysed reaction is K(+)(in) = K(+)(out). Functionally, non-selective voltage-gated ion channel that mediates the transport of anions and cations through the mitochondrion outer membrane and plasma membrane. Forms a high-conducting channel with a stable open state and a voltage-induced closure with a mild preference for anions over cations. Involved in male fertility and sperm mitochondrial sheath formation. In Sus scrofa (Pig), this protein is Non-selective voltage-gated ion channel VDAC3.